Reading from the N-terminus, the 278-residue chain is Toxin coregulated pilus biosynthesis protein D (278 aa).

The chain crosses the membrane as a helical span at residues 30-50; the sequence is LLVAIIFLVLSILGGGAYLYY.

It is found in the cell membrane. Involved in TCP pilus biogenesis. The chain is Toxin coregulated pilus biosynthesis protein D (tcpD) from Vibrio cholerae serotype O1 (strain ATCC 39315 / El Tor Inaba N16961).